The sequence spans 59 residues: Large ribosomal subunit protein uL30 (59 aa).

This sequence belongs to the universal ribosomal protein uL30 family. Part of the 50S ribosomal subunit.

In Leptospira biflexa serovar Patoc (strain Patoc 1 / ATCC 23582 / Paris), this protein is Large ribosomal subunit protein uL30.